The sequence spans 309 residues: tRNA dimethylallyltransferase (309 aa).

10 to 17 (GPTAVGKT) is an ATP binding site. Substrate is bound at residue 12 to 17 (TAVGKT). The segment at 35–38 (DSMQ) is interaction with substrate tRNA.

Belongs to the IPP transferase family. Monomer. The cofactor is Mg(2+).

It carries out the reaction adenosine(37) in tRNA + dimethylallyl diphosphate = N(6)-dimethylallyladenosine(37) in tRNA + diphosphate. Its function is as follows. Catalyzes the transfer of a dimethylallyl group onto the adenine at position 37 in tRNAs that read codons beginning with uridine, leading to the formation of N6-(dimethylallyl)adenosine (i(6)A). The chain is tRNA dimethylallyltransferase from Clostridium beijerinckii (strain ATCC 51743 / NCIMB 8052) (Clostridium acetobutylicum).